Consider the following 46-residue polypeptide: Protein PsbN (46 aa).

Residues 7-27 (ALSVALGVMAVVLGLTGFGVY) traverse the membrane as a helical segment.

This sequence belongs to the PsbN family.

Its subcellular location is the cellular thylakoid membrane. Its function is as follows. May play a role in photosystem I and II biogenesis. This chain is Protein PsbN, found in Synechococcus sp. (strain CC9902).